The sequence spans 174 residues: Ribosome maturation factor RimM (174 aa).

Positions 96–170 (PDEFYDHELE…YVVIDPPEGL (75 aa)) constitute a PRC barrel domain.

Belongs to the RimM family. In terms of assembly, binds ribosomal protein uS19.

Its subcellular location is the cytoplasm. Its function is as follows. An accessory protein needed during the final step in the assembly of 30S ribosomal subunit, possibly for assembly of the head region. Essential for efficient processing of 16S rRNA. May be needed both before and after RbfA during the maturation of 16S rRNA. It has affinity for free ribosomal 30S subunits but not for 70S ribosomes. This Nocardia farcinica (strain IFM 10152) protein is Ribosome maturation factor RimM.